Consider the following 348-residue polypeptide: Uroporphyrinogen decarboxylase (348 aa).

Substrate is bound by residues Arg27–Arg31, Phe46, Asp76, Tyr152, Ser207, and His320.

This sequence belongs to the uroporphyrinogen decarboxylase family. Homodimer.

The protein resides in the cytoplasm. The catalysed reaction is uroporphyrinogen III + 4 H(+) = coproporphyrinogen III + 4 CO2. It functions in the pathway porphyrin-containing compound metabolism; protoporphyrin-IX biosynthesis; coproporphyrinogen-III from 5-aminolevulinate: step 4/4. Catalyzes the decarboxylation of four acetate groups of uroporphyrinogen-III to yield coproporphyrinogen-III. This Bacillus anthracis protein is Uroporphyrinogen decarboxylase.